The chain runs to 83 residues: Weak neurotoxin WNTX33 (83 aa).

The first 21 residues, 1 to 21 (MKTLLLTLVVVTIVCLDLGYS), serve as a signal peptide directing secretion. Intrachain disulfides connect Cys-24-Cys-45, Cys-38-Cys-62, Cys-64-Cys-75, and Cys-76-Cys-81.

The protein belongs to the three-finger toxin family. Short-chain subfamily. As to expression, expressed by the venom gland.

It is found in the secreted. This Ophiophagus hannah (King cobra) protein is Weak neurotoxin WNTX33.